The chain runs to 348 residues: Protein pelota homolog (348 aa).

Belongs to the eukaryotic release factor 1 family. Pelota subfamily. As to quaternary structure, monomer. It depends on a divalent metal cation as a cofactor.

Its subcellular location is the cytoplasm. May function in recognizing stalled ribosomes, interact with stem-loop structures in stalled mRNA molecules, and effect endonucleolytic cleavage of the mRNA. May play a role in the release non-functional ribosomes and degradation of damaged mRNAs. Has endoribonuclease activity. The sequence is that of Protein pelota homolog from Methanococcus vannielii (strain ATCC 35089 / DSM 1224 / JCM 13029 / OCM 148 / SB).